A 496-amino-acid polypeptide reads, in one-letter code: Hexokinase-1 (496 aa).

A helical membrane pass occupies residues 4–24 (VAVGATVVCTAAVCAVAVLVV). A Hexokinase domain is found at 35–487 (GRVLAILKAF…SGIGAALLAA (453 aa)). The tract at residues 90–228 (SGDEKGLFYA…GLDMRIAALV (139 aa)) is hexokinase small subdomain. G104, T105, and N106 together coordinate ADP. D-glucose contacts are provided by T194, K195, N229, and D230. The hexokinase large subdomain stretch occupies residues 229–476 (NDTVGTLAGG…GSVEVTHSND (248 aa)). Residue T253 coordinates ADP. N256, E284, and E315 together coordinate D-glucose. Position 441 (G441) interacts with ADP.

Belongs to the hexokinase family. In terms of assembly, interacts with RPT5B in nucleus. Interacts with RHIP1. Interacts with KING1 in mitochondria. Interacts with CLF (via SANT domain) and EZA1/SWN (via SANT domain) in nucleus. Highly expressed in flowers and siliques, at intermediate levels in roots and stems, and at lower levels in rosette and cauline leaves.

The protein localises to the mitochondrion outer membrane. It is found in the nucleus. The enzyme catalyses a D-hexose + ATP = a D-hexose 6-phosphate + ADP + H(+). The catalysed reaction is D-fructose + ATP = D-fructose 6-phosphate + ADP + H(+). It catalyses the reaction D-glucose + ATP = D-glucose 6-phosphate + ADP + H(+). Its pathway is carbohydrate metabolism; hexose metabolism. It functions in the pathway carbohydrate degradation; glycolysis; D-glyceraldehyde 3-phosphate and glycerone phosphate from D-glucose: step 1/4. Fructose and glucose phosphorylating enzyme. May be involved in the phosphorylation of glucose during the export from mitochondrion to cytosol. Acts as a sugar sensor which may regulate sugar-dependent gene repression or activation. Mediates the effects of sugar on plant growth and development independently of its catalytic activity or the sugar metabolism. May regulate the execution of program cell death in plant cells. Promotes roots and leaves growth. Together with sugar, is involved in the regulation of the expression of aquaporin genes, and reduces leaf water conductance, to coordinate sugar levels with the loss of water through transpiration. Regulates cell proliferation and expansion early during leaf development. Involved in sucrose-induced leaf growth stimulation independently of GPT2. May participate to the stimulation of hypocotyl elongation under long-day (LD) conditions. Forms a nuclear complex with CLF and EZA1/SWN to target common glucose-responsive genes and regulate glucose signaling. Is required for CLF- and EZA1/SWN-mediated histone H3 trimethylation on 'Lys-27' (H3K27me3) and glucose-mediated gene repression. This chain is Hexokinase-1, found in Arabidopsis thaliana (Mouse-ear cress).